A 297-amino-acid chain; its full sequence is Vacuolar protein sorting-associated protein 26C (297 aa).

It belongs to the VPS26 family. Component of the commander complex that is essential for endosomal recycling of transmembrane cargos; the commander complex is composed of the CCC subcomplex and the retriever subcomplex. Component of the heterotrimeric retriever complex consisting of VPS26C, VPS29 and VPS35L; within the complex interacts with VPS35L. Interacts with SNX17 (via C-terminus); the interaction is direct and associates SNX17 with the retriever complex. Interacts with SNX31; the interaction is direct. As to expression, ubiquitously expressed.

Its subcellular location is the endosome. Its function is as follows. Component of the commander complex that is essential for endosomal recycling of transmembrane cargos; the commander complex is composed of the CCC subcomplex and the retriever subcomplex. Component of the retriever complex, which is a heterotrimeric complex related to retromer cargo-selective complex (CSC) and essential for retromer-independent retrieval and recycling of numerous cargos such as integrin alpha-5/beta-1 (ITGA5:ITGB1). The recruitment of the retriever complex to the endosomal membrane involves CCC and WASH complexes. In the endosomes, drives the retriever and recycling of NxxY-motif-containing cargo proteins by coupling to SNX17, a cargo essential for the homeostatic maintenance of numerous cell surface proteins associated with processes that include cell migration, cell adhesion, nutrient supply and cell signaling. Functionally, (Microbial infection) The heterotrimeric retriever complex, in collaboration with the CCC complex, mediates the exit of human papillomavirus to the cell surface. The polypeptide is Vacuolar protein sorting-associated protein 26C (Homo sapiens (Human)).